A 93-amino-acid polypeptide reads, in one-letter code: UPF0358 protein lin1058 (93 aa).

Belongs to the UPF0358 family.

The chain is UPF0358 protein lin1058 from Listeria innocua serovar 6a (strain ATCC BAA-680 / CLIP 11262).